Consider the following 391-residue polypeptide: Succinate--CoA ligase [ADP-forming] subunit beta (391 aa).

Residues 9–248 enclose the ATP-grasp domain; that stretch reads KDILRKFGVS…TGEEDPFEVE (240 aa). Residues Lys50, 57–59, Glu103, Met106, and Glu111 each bind ATP; that span reads GRG. Residues Asn203 and Asp217 each coordinate Mg(2+). Residues Asn268 and 325–327 contribute to the substrate site; that span reads GIV.

This sequence belongs to the succinate/malate CoA ligase beta subunit family. Heterotetramer of two alpha and two beta subunits. Mg(2+) serves as cofactor.

The enzyme catalyses succinate + ATP + CoA = succinyl-CoA + ADP + phosphate. It catalyses the reaction GTP + succinate + CoA = succinyl-CoA + GDP + phosphate. The protein operates within carbohydrate metabolism; tricarboxylic acid cycle; succinate from succinyl-CoA (ligase route): step 1/1. Functionally, succinyl-CoA synthetase functions in the citric acid cycle (TCA), coupling the hydrolysis of succinyl-CoA to the synthesis of either ATP or GTP and thus represents the only step of substrate-level phosphorylation in the TCA. The beta subunit provides nucleotide specificity of the enzyme and binds the substrate succinate, while the binding sites for coenzyme A and phosphate are found in the alpha subunit. The protein is Succinate--CoA ligase [ADP-forming] subunit beta of Chlorobium phaeobacteroides (strain BS1).